Here is a 313-residue protein sequence, read N- to C-terminus: D-alanine--D-alanine ligase (313 aa).

One can recognise an ATP-grasp domain in the interval 107–303 (KQAFAAAGLT…FEALVEQIAC (197 aa)). Position 135-188 (135-188 (PFGLPVVVKPVQEGSSVGVTIVKKPEDLQAALDEAFRYDTLVLVEKYIKGQEVQ)) interacts with ATP. 3 residues coordinate Mg(2+): D256, E269, and N271.

The protein belongs to the D-alanine--D-alanine ligase family. It depends on Mg(2+) as a cofactor. The cofactor is Mn(2+).

The protein localises to the cytoplasm. It carries out the reaction 2 D-alanine + ATP = D-alanyl-D-alanine + ADP + phosphate + H(+). It participates in cell wall biogenesis; peptidoglycan biosynthesis. Cell wall formation. The protein is D-alanine--D-alanine ligase of Trichlorobacter lovleyi (strain ATCC BAA-1151 / DSM 17278 / SZ) (Geobacter lovleyi).